The sequence spans 432 residues: MKKAMIYGLGISGTGAKELLEKEGYKIIVVDDKKAMTSEEALNHLEGLEFFIKSPGIPYNDFVKEVQKRGIKILDEIEIAYNYMIEKGLKTKIIAITGTNGKSTTTAKISDMLNHAGYKATYAGNIGRSLSEVLLKEKDLDFISLELSSFQLENIENFKPCISMIINIGPDHIERYKSFDEYYNTKFNITKNQTEDLYFIENIDDEEIEKRAKQIKAKRISVSKFKKADIFVENDKIYHDKDDIIDVDKLSLKGIHNLENTLFMVATAEILKLDREKLKEFLMIATPLEHRTELFFNYGKLKFINDSKATNVDSTKFAIQANKNSILICGGYDKGVDLAPLAEMIKENIKEVYLIGVIADKIENELKKVGYEDNKIHKLVNIENSLQDMRKRFTKDSDEVILLSPATSSYDQFNSFEHRGKVFKELVLKIFG.

Position 98–104 (98–104 (GTNGKST)) interacts with ATP.

Belongs to the MurCDEF family.

Its subcellular location is the cytoplasm. The catalysed reaction is UDP-N-acetyl-alpha-D-muramoyl-L-alanine + D-glutamate + ATP = UDP-N-acetyl-alpha-D-muramoyl-L-alanyl-D-glutamate + ADP + phosphate + H(+). It functions in the pathway cell wall biogenesis; peptidoglycan biosynthesis. Cell wall formation. Catalyzes the addition of glutamate to the nucleotide precursor UDP-N-acetylmuramoyl-L-alanine (UMA). This chain is UDP-N-acetylmuramoylalanine--D-glutamate ligase, found in Fusobacterium nucleatum subsp. nucleatum (strain ATCC 25586 / DSM 15643 / BCRC 10681 / CIP 101130 / JCM 8532 / KCTC 2640 / LMG 13131 / VPI 4355).